The following is a 170-amino-acid chain: MTGVDEILNYKRNPDDDYYALLGCDENSTVEQITAEYKVLALQYHPDKNDGDKEAEAKFQQLKEAKETLCEPSKRALYDKWRQSGIAMGFKQWLGMKDHVQQSMHWSKPNTKDRMLEGEPGKPSGPSSLGPSNPGARRASEGGAALWGRWGAGNQEPPSEVISKFRNYEI.

In terms of domain architecture, J spans 17–82; sequence DYYALLGCDE…SKRALYDKWR (66 aa). Residues 101–170 are disordered; sequence QQSMHWSKPN…VISKFRNYEI (70 aa). The segment covering 110–120 has biased composition (basic and acidic residues); it reads NTKDRMLEGEP. Composition is skewed to low complexity over residues 121–135 and 142–153; these read GKPS…SNPG and GGAALWGRWGAG.

The polypeptide is J domain-containing protein (jdp) (Manduca sexta (Tobacco hawkmoth)).